The following is a 267-amino-acid chain: NLP effector protein 6 (267 aa).

The first 35 residues, Met-1 to Ala-35, serve as a signal peptide directing secretion. N-linked (GlcNAc...) asparagine glycosylation is present at Asn-114. Residues Ala-117 to Arg-127 carry the Conserved undecapeptide motif motif. The Conserved heptapeptide motif motif lies at Ile-134 to Lys-140. Residue Asn-192 is glycosylated (N-linked (GlcNAc...) asparagine).

Belongs to the Necrosis inducing protein (NPP1) family.

The protein localises to the secreted. In terms of biological role, probable secreted effector that may act as a pathogen-associated molecular pattern (PAMP) recognized by the plant immune system. In Plasmopara viticola (Downy mildew of grapevine), this protein is NLP effector protein 6.